A 120-amino-acid polypeptide reads, in one-letter code: NAD(P)H-quinone oxidoreductase subunit 3, chloroplastic (120 aa).

Helical transmembrane passes span 2–22 (FLLY…VIPI), 64–84 (MFAL…PWAL), and 88–108 (ILGV…VLGL).

The protein belongs to the complex I subunit 3 family. In terms of assembly, NDH is composed of at least 16 different subunits, 5 of which are encoded in the nucleus.

Its subcellular location is the plastid. The protein resides in the chloroplast thylakoid membrane. It carries out the reaction a plastoquinone + NADH + (n+1) H(+)(in) = a plastoquinol + NAD(+) + n H(+)(out). The catalysed reaction is a plastoquinone + NADPH + (n+1) H(+)(in) = a plastoquinol + NADP(+) + n H(+)(out). NDH shuttles electrons from NAD(P)H:plastoquinone, via FMN and iron-sulfur (Fe-S) centers, to quinones in the photosynthetic chain and possibly in a chloroplast respiratory chain. The immediate electron acceptor for the enzyme in this species is believed to be plastoquinone. Couples the redox reaction to proton translocation, and thus conserves the redox energy in a proton gradient. The polypeptide is NAD(P)H-quinone oxidoreductase subunit 3, chloroplastic (Oenothera biennis (German evening primrose)).